The chain runs to 100 residues: Small ribosomal subunit protein uS17 (100 aa).

Belongs to the universal ribosomal protein uS17 family. In terms of assembly, part of the 30S ribosomal subunit.

In terms of biological role, one of the primary rRNA binding proteins, it binds specifically to the 5'-end of 16S ribosomal RNA. The chain is Small ribosomal subunit protein uS17 from Erythrobacter litoralis (strain HTCC2594).